Reading from the N-terminus, the 262-residue chain is Protein BcsX (262 aa).

The protein operates within glycan metabolism; bacterial cellulose biosynthesis. This Komagataeibacter xylinus (Gluconacetobacter xylinus) protein is Protein BcsX (bcsX).